A 445-amino-acid chain; its full sequence is Tubulin beta chain (445 aa).

GTP is bound by residues Gln-11, Glu-69, Ser-138, Gly-142, Thr-143, Gly-144, Asn-204, and Asn-226. Position 69 (Glu-69) interacts with Mg(2+).

It belongs to the tubulin family. As to quaternary structure, dimer of alpha and beta chains. A typical microtubule is a hollow water-filled tube with an outer diameter of 25 nm and an inner diameter of 15 nM. Alpha-beta heterodimers associate head-to-tail to form protofilaments running lengthwise along the microtubule wall with the beta-tubulin subunit facing the microtubule plus end conferring a structural polarity. Microtubules usually have 13 protofilaments but different protofilament numbers can be found in some organisms and specialized cells. Mg(2+) is required as a cofactor.

It is found in the cytoplasm. The protein localises to the cytoskeleton. Functionally, tubulin is the major constituent of microtubules, a cylinder consisting of laterally associated linear protofilaments composed of alpha- and beta-tubulin heterodimers. Microtubules grow by the addition of GTP-tubulin dimers to the microtubule end, where a stabilizing cap forms. Below the cap, tubulin dimers are in GDP-bound state, owing to GTPase activity of alpha-tubulin. This chain is Tubulin beta chain, found in Leishmania mexicana.